We begin with the raw amino-acid sequence, 533 residues long: Lymphocyte cytosolic protein 2 (533 aa).

The SAM domain maps to 12–78 (VLAWNSDNLA…SQDINKNEER (67 aa)). Y23 bears the Phosphotyrosine mark. Disordered stretches follow at residues 78–359 (RRSI…PLAH) and 374–419 (SASL…TPLD). Acidic residues predominate over residues 94-144 (ETESHEEDDGGWSSFEDDYESPNDDDPDGEDDGDYESPNEEEQALVDDAAD). The span at 151-172 (NNEEALQSSILPPNSFHNTNSM) shows a compositional bias: polar residues. Over residues 186-201 (PPVPPLRPKPALPPLP) the composition is skewed to pro residues. Phosphoserine occurs at positions 207 and 210. Residues 340-354 (NTFPSRSVQPSSKNT) show a composition bias toward polar residues. Phosphoserine occurs at positions 376 and 410. Residues 400–411 (LPVPNRPQPPSP) are compositionally biased toward pro residues. One can recognise an SH2 domain in the interval 422 to 530 (WYVSYITRPE…RYQCTLTHAA (109 aa)).

In terms of assembly, interacts with SLA. Interacts with CBLB. Interacts with GRB2. Interacts with SHB. Interacts with PRAM1. Interacts (via SH2 domain) with CD6 (via tyrosine phosphorylated C-terminus). Interacts with FYB1 and the phosphorylated form of FYB2. Interacts with 14-3-3 adapter/YWHAZ; this phosphorylation leads to YWHAZ proteolytic degradation. Interacts with VAV1; this interaction plays a role in TCR-mediated cytokine production. Interacts with AGER; this interaction plays an important role in AGER-mediated pro-inflammatory responses and cytokine release. Phosphorylated after T-cell receptor activation by ZAP70, ITK and TXK, which leads to the up-regulation of Th1 preferred cytokine IL-2. SYK-dependent phosphorylation is required for recruitment of PI3K signaling components. Highly expressed in spleen, thymus, and peripheral blood leukocytes.

Its subcellular location is the cytoplasm. In terms of biological role, adapter protein primarily involved in signaling pathways within T-cells, as well as other immune cells such as platelets, mast cells, and natural killer (NK) cells. Plays a crucial role for transducing signal from the T-cell receptor (TCR) after antigen recognition leading to T-cell activation. Mechanistically, once phosphorylated by the kinase ZAP70, mediates interactions with the guanine-nucleotide exchange factor VAV1, the adapter protein NCK and the kinase ITK. In turn, stimulates the activation of PKC-theta/PRKCQ and NF-kappa-B transcriptional activity in response to CD3 and CD28 costimulation. Also plays an essential role in AGER-induced signaling pathways including p38 MAPK and ERK1/2 activation leading to cytokine release and pro-inflammatory responses. The chain is Lymphocyte cytosolic protein 2 (Lcp2) from Mus musculus (Mouse).